The primary structure comprises 342 residues: Holliday junction branch migration complex subunit RuvB (342 aa).

Positions 1–179 (MTNILSPEKS…FGIPMRLNFY (179 aa)) are large ATPase domain (RuvB-L). Residues isoleucine 18, arginine 19, glycine 60, lysine 63, threonine 64, threonine 65, 126-128 (EDF), arginine 169, tyrosine 179, and arginine 216 contribute to the ATP site. Threonine 64 is a Mg(2+) binding site. A small ATPAse domain (RuvB-S) region spans residues 180 to 250 (NTEELKKVLN…VSDFGLNRLE (71 aa)). The tract at residues 253-342 (RIGLDSNDYR…HQFNIFNENE (90 aa)) is head domain (RuvB-H). DNA-binding residues include arginine 289, arginine 308, and arginine 313.

This sequence belongs to the RuvB family. In terms of assembly, homohexamer. Forms an RuvA(8)-RuvB(12)-Holliday junction (HJ) complex. HJ DNA is sandwiched between 2 RuvA tetramers; dsDNA enters through RuvA and exits via RuvB. An RuvB hexamer assembles on each DNA strand where it exits the tetramer. Each RuvB hexamer is contacted by two RuvA subunits (via domain III) on 2 adjacent RuvB subunits; this complex drives branch migration. In the full resolvosome a probable DNA-RuvA(4)-RuvB(12)-RuvC(2) complex forms which resolves the HJ.

The protein resides in the cytoplasm. It carries out the reaction ATP + H2O = ADP + phosphate + H(+). In terms of biological role, the RuvA-RuvB-RuvC complex processes Holliday junction (HJ) DNA during genetic recombination and DNA repair, while the RuvA-RuvB complex plays an important role in the rescue of blocked DNA replication forks via replication fork reversal (RFR). RuvA specifically binds to HJ cruciform DNA, conferring on it an open structure. The RuvB hexamer acts as an ATP-dependent pump, pulling dsDNA into and through the RuvAB complex. RuvB forms 2 homohexamers on either side of HJ DNA bound by 1 or 2 RuvA tetramers; 4 subunits per hexamer contact DNA at a time. Coordinated motions by a converter formed by DNA-disengaged RuvB subunits stimulates ATP hydrolysis and nucleotide exchange. Immobilization of the converter enables RuvB to convert the ATP-contained energy into a lever motion, pulling 2 nucleotides of DNA out of the RuvA tetramer per ATP hydrolyzed, thus driving DNA branch migration. The RuvB motors rotate together with the DNA substrate, which together with the progressing nucleotide cycle form the mechanistic basis for DNA recombination by continuous HJ branch migration. Branch migration allows RuvC to scan DNA until it finds its consensus sequence, where it cleaves and resolves cruciform DNA. The chain is Holliday junction branch migration complex subunit RuvB from Rickettsia rickettsii (strain Sheila Smith).